The primary structure comprises 85 residues: Defensin-like protein 76 (85 aa).

Residues 1–27 form the signal peptide; that stretch reads MQNQKHSHILTAITIVLLFAMAAKINA. Disulfide bonds link Cys35-Cys70, Cys40-Cys59, Cys44-Cys68, and Cys48-Cys69.

Belongs to the DEFL family.

Its subcellular location is the secreted. In Arabidopsis thaliana (Mouse-ear cress), this protein is Defensin-like protein 76 (LCR86).